Reading from the N-terminus, the 412-residue chain is Argininosuccinate synthase (412 aa).

ATP contacts are provided by residues A24–S32 and A50. 2 residues coordinate L-citrulline: Y103 and S108. ATP is bound at residue G132. Residues T134, N138, and D139 each contribute to the L-aspartate site. N138 contributes to the L-citrulline binding site. R142 is an L-citrulline binding site.

It belongs to the argininosuccinate synthase family. Type 1 subfamily. In terms of assembly, homotetramer.

The protein resides in the cytoplasm. It catalyses the reaction L-citrulline + L-aspartate + ATP = 2-(N(omega)-L-arginino)succinate + AMP + diphosphate + H(+). Its pathway is amino-acid biosynthesis; L-arginine biosynthesis; L-arginine from L-ornithine and carbamoyl phosphate: step 2/3. The protein is Argininosuccinate synthase of Xanthomonas axonopodis pv. citri (strain 306).